The chain runs to 148 residues: Probable calcium-binding protein CML14 (148 aa).

3 EF-hand domains span residues Asp-9 to Asn-44, Pro-80 to Lys-115, and Leu-116 to Lys-148. Ca(2+) is bound by residues Asp-22, Asp-24, Asp-26, Lys-28, and Glu-33.

Its function is as follows. Potential calcium sensor. The chain is Probable calcium-binding protein CML14 (CML14) from Arabidopsis thaliana (Mouse-ear cress).